We begin with the raw amino-acid sequence, 481 residues long: Phospho-2-dehydro-3-deoxyheptonate aldolase (481 aa).

The tract at residues 1–22 (MSQQTTPNAPGWAPDSWRSKPI) is disordered.

Belongs to the class-II DAHP synthase family. Homodimer. Post-translationally, the N-terminus is blocked.

It carries out the reaction D-erythrose 4-phosphate + phosphoenolpyruvate + H2O = 7-phospho-2-dehydro-3-deoxy-D-arabino-heptonate + phosphate. It participates in metabolic intermediate biosynthesis; chorismate biosynthesis; chorismate from D-erythrose 4-phosphate and phosphoenolpyruvate: step 1/7. The sequence is that of Phospho-2-dehydro-3-deoxyheptonate aldolase (aro-8) from Neurospora crassa (strain ATCC 24698 / 74-OR23-1A / CBS 708.71 / DSM 1257 / FGSC 987).